The chain runs to 145 residues: 6-pyruvoyl tetrahydrobiopterin synthase (145 aa).

S19 is modified (phosphoserine; by PKG). Zn(2+) is bound at residue H24. A Phosphoserine modification is found at S28. Catalysis depends on C43, which acts as the Proton acceptor. Positions 49 and 51 each coordinate Zn(2+). The Charge relay system role is filled by H90. Residue Y128 is modified to Phosphotyrosine. E134 serves as the catalytic Charge relay system.

The protein belongs to the PTPS family. In terms of assembly, homohexamer formed of two homotrimers in a head to head fashion. The cofactor is Zn(2+). Post-translationally, phosphorylation of Ser-19 is required for maximal enzyme activity.

The enzyme catalyses 7,8-dihydroneopterin 3'-triphosphate = 6-pyruvoyl-5,6,7,8-tetrahydropterin + triphosphate + H(+). Its pathway is cofactor biosynthesis; tetrahydrobiopterin biosynthesis; tetrahydrobiopterin from 7,8-dihydroneopterin triphosphate: step 1/3. Functionally, involved in the biosynthesis of tetrahydrobiopterin, an essential cofactor of aromatic amino acid hydroxylases. Catalyzes the transformation of 7,8-dihydroneopterin triphosphate into 6-pyruvoyl tetrahydropterin. The polypeptide is 6-pyruvoyl tetrahydrobiopterin synthase (PTS) (Homo sapiens (Human)).